Reading from the N-terminus, the 500-residue chain is Melanopsin (500 aa).

Over 1–65 (MSHHSSWRGH…TVDVPDHAHY (65 aa)) the chain is Extracellular. Residue Asn18 is glycosylated (N-linked (GlcNAc...) asparagine). The chain crosses the membrane as a helical span at residues 66 to 86 (IIGAVILIVGITGVIGNALVI). Residues 87-101 (YVFCRSRTLRTAGNM) are Cytoplasmic-facing. The helical transmembrane segment at 102–122 (FVVNLAVADFFMSLTQSPVFF) threads the bilayer. Topologically, residues 123 to 138 (AASLHRRWIFGERICE) are extracellular. A disulfide bridge connects residues Cys137 and Cys215. Residues 139–159 (LYAFCGALFGICSMMTLTAIA) form a helical membrane-spanning segment. The Cytoplasmic segment spans residues 160 to 182 (ADRCLAITQPLALVGNVSRRKAG). A helical membrane pass occupies residues 183–203 (AVLAVVWLYSLGWSLPPFFGW). At 204 to 232 (SAYVPEGLQTSCSWDYMTFTPSVRAYTIL) the chain is on the extracellular side. A helical membrane pass occupies residues 233–253 (LFIFVFFIPLGIIVSCYVGIF). At 254-286 (QAIRAMGKEIRELDCGETQKVYERMQNEWKMAK) the chain is on the cytoplasmic side. A helical membrane pass occupies residues 287 to 307 (IALLVILLFVISWSPYSVVAL). Residues 308–322 (TATAGYSHLLTPYMN) are Extracellular-facing. The helical transmembrane segment at 323–343 (SVPAVIAKASAIHNPIIYAIT) threads the bilayer. At Lys330 the chain carries N6-(retinylidene)lysine. Residues 344–500 (HPKYRAAIAR…DGKALLLGGN (157 aa)) are Cytoplasmic-facing. 3 disordered regions span residues 406–428 (GKKR…ADGS), 448–470 (VILS…AHKV), and 481–500 (ETDS…LGGN). 2 stretches are compositionally biased toward polar residues: residues 411-428 (SSAS…ADGS) and 448-462 (VILS…ASGQ).

The protein belongs to the G-protein coupled receptor 1 family. Opsin subfamily. Expressed in a subset of retinal horizontal cells as well as in retinal ganglion cells.

The protein localises to the cell membrane. Functionally, photoreceptor implicated in non-image-forming responses to light. This chain is Melanopsin (opn4), found in Rutilus rutilus (Roach).